The chain runs to 241 residues: Small ribosomal subunit protein uS3 (241 aa).

The region spanning 39–107 (IRTYLKKELY…PLSVNIKEEK (69 aa)) is the KH type-2 domain. A disordered region spans residues 214-241 (AEVKEEQQKEGARRPKRAPKRENSGKAE). A compositionally biased stretch (basic and acidic residues) spans 215 to 226 (EVKEEQQKEGAR).

Belongs to the universal ribosomal protein uS3 family. In terms of assembly, part of the 30S ribosomal subunit. Forms a tight complex with proteins S10 and S14.

Its function is as follows. Binds the lower part of the 30S subunit head. Binds mRNA in the 70S ribosome, positioning it for translation. In Sulfurimonas denitrificans (strain ATCC 33889 / DSM 1251) (Thiomicrospira denitrificans (strain ATCC 33889 / DSM 1251)), this protein is Small ribosomal subunit protein uS3.